The chain runs to 625 residues: Glutamyl-tRNA(Gln) amidotransferase subunit E (625 aa).

The protein belongs to the GatB/GatE family. GatE subfamily. Heterodimer of GatD and GatE.

The catalysed reaction is L-glutamyl-tRNA(Gln) + L-glutamine + ATP + H2O = L-glutaminyl-tRNA(Gln) + L-glutamate + ADP + phosphate + H(+). Functionally, allows the formation of correctly charged Gln-tRNA(Gln) through the transamidation of misacylated Glu-tRNA(Gln) in organisms which lack glutaminyl-tRNA synthetase. The reaction takes place in the presence of glutamine and ATP through an activated gamma-phospho-Glu-tRNA(Gln). The GatDE system is specific for glutamate and does not act on aspartate. The protein is Glutamyl-tRNA(Gln) amidotransferase subunit E of Caldivirga maquilingensis (strain ATCC 700844 / DSM 13496 / JCM 10307 / IC-167).